The following is a 504-amino-acid chain: ATP synthase subunit alpha, chloroplastic (504 aa).

170 to 177 (GDRQTGKT) is a binding site for ATP.

Belongs to the ATPase alpha/beta chains family. F-type ATPases have 2 components, CF(1) - the catalytic core - and CF(0) - the membrane proton channel. CF(1) has five subunits: alpha(3), beta(3), gamma(1), delta(1), epsilon(1). CF(0) has four main subunits: a, b, b' and c.

The protein resides in the plastid. It is found in the chloroplast thylakoid membrane. It catalyses the reaction ATP + H2O + 4 H(+)(in) = ADP + phosphate + 5 H(+)(out). Produces ATP from ADP in the presence of a proton gradient across the membrane. The alpha chain is a regulatory subunit. This Cyanidium caldarium (Red alga) protein is ATP synthase subunit alpha, chloroplastic.